We begin with the raw amino-acid sequence, 146 residues long: UPF0260 protein VF_1660 (146 aa).

The protein belongs to the UPF0260 family.

This chain is UPF0260 protein VF_1660, found in Aliivibrio fischeri (strain ATCC 700601 / ES114) (Vibrio fischeri).